Reading from the N-terminus, the 396-residue chain is 3-hydroxykynurenine transaminase (396 aa).

Residues 43–44 form a binds to and confers specificity for 3-hydroxykynurenine; shared with dimeric partner region; the sequence is SN. Pyridoxal 5'-phosphate contacts are provided by residues 77 to 79, Ser154, and Gln204; that span reads SAH. Substrate is bound at residue Ser154. Lys205 carries the N6-(pyridoxal phosphate)lysine modification. The pyridoxal 5'-phosphate site is built by Tyr256 and Thr259. Residue Arg356 coordinates substrate.

It belongs to the class-V pyridoxal-phosphate-dependent aminotransferase family. As to quaternary structure, homodimer. The cofactor is pyridoxal 5'-phosphate. In terms of tissue distribution, expressed in gut and ovaries.

Its subcellular location is the peroxisome. The catalysed reaction is L-kynurenine + glyoxylate = kynurenate + glycine + H2O. It catalyses the reaction 3-hydroxy-L-kynurenine + glyoxylate = xanthurenate + glycine + H2O. It carries out the reaction 3-hydroxy-L-kynurenine + pyruvate = xanthurenate + L-alanine + H2O. The enzyme catalyses glyoxylate + L-alanine = glycine + pyruvate. The protein operates within amino-acid degradation; L-kynurenine degradation; kynurenate from L-kynurenine: step 1/2. In terms of biological role, catalyzes the pyridoxal 5'-phosphate-dependent transamination of both 3-hydroxykynurenine and L-kynurenine to xanthurenic acid and kynurenic acid, respectively, preferentially using the alpha-ketoacid glyoxylate as the amino group acceptor. Although glyoxylate is the preferred amino group acceptor, transamination of 3-hydroxykynurenine also works with pyruvate as the amino acceptor in vitro. Involved in the detoxification of cytotoxic metabolite 3-hydroxykynurenine generated by the hydroxylation of L-kynurenine, an intermediate in the tryptophan catabolism pathway. The Plasmodium parasite uses xanthurenic acid produced in the midgut to activate its gametocytes ingested during a blood meal. Also catalyzes, although with a lesser efficiency, the transamination of alanine with glyoxylate as an amino group acceptor. May play a role in the detoxification of glyoxylate, a toxic plant metabolite from the diet. In Anopheles gambiae (African malaria mosquito), this protein is 3-hydroxykynurenine transaminase.